The primary structure comprises 108 residues: MEAKTFAFLEIAMFIALGIQTFVAVTDAAGKDDEHFSVDYCGMNCTQQEDGSWTACSGRNGECRCYHESGKRSGLCLSTTYIDFSEYGNLSDSDIAAASPRLSMKESH.

The signal sequence occupies residues 1–28 (MEAKTFAFLEIAMFIALGIQTFVAVTDA). Intrachain disulfides connect cysteine 41–cysteine 63, cysteine 45–cysteine 65, and cysteine 56–cysteine 76. Residue asparagine 44 is glycosylated (N-linked (GlcNAc...) asparagine). The N-linked (GlcNAc...) asparagine glycan is linked to asparagine 89.

The protein localises to the secreted. In terms of biological role, salivary chemokine-binding protein which binds to host chemokines CXCL1, CXCL2, CXCL3, CXCL5 and CXCL8. This is Evasin P1127 from Ixodes ricinus (Common tick).